A 223-amino-acid polypeptide reads, in one-letter code: Urease accessory protein UreF (223 aa).

This sequence belongs to the UreF family. UreD, UreF and UreG form a complex that acts as a GTP-hydrolysis-dependent molecular chaperone, activating the urease apoprotein by helping to assemble the nickel containing metallocenter of UreC. The UreE protein probably delivers the nickel.

It localises to the cytoplasm. Required for maturation of urease via the functional incorporation of the urease nickel metallocenter. The sequence is that of Urease accessory protein UreF from Sinorhizobium medicae (strain WSM419) (Ensifer medicae).